The sequence spans 355 residues: Uroporphyrinogen decarboxylase (355 aa).

Substrate contacts are provided by residues 36–40 (RQAGR), aspartate 85, tyrosine 160, serine 215, and histidine 334.

This sequence belongs to the uroporphyrinogen decarboxylase family. As to quaternary structure, homodimer.

It localises to the cytoplasm. It catalyses the reaction uroporphyrinogen III + 4 H(+) = coproporphyrinogen III + 4 CO2. The protein operates within porphyrin-containing compound metabolism; protoporphyrin-IX biosynthesis; coproporphyrinogen-III from 5-aminolevulinate: step 4/4. In terms of biological role, catalyzes the decarboxylation of four acetate groups of uroporphyrinogen-III to yield coproporphyrinogen-III. The chain is Uroporphyrinogen decarboxylase from Rhodococcus erythropolis (strain PR4 / NBRC 100887).